A 218-amino-acid polypeptide reads, in one-letter code: Acetyl- and succinyl-CoA transferase MT0822 (218 aa).

The N-acetyltransferase domain occupies 32 to 188 (DTILEGVHDP…EALLFRLTRD (157 aa)). Substrate contacts are provided by residues Gln94, 109–113 (SGSWL), 119–124 (GHGYGT), 145–151 (SRSFVDN), and Arg160.

As to quaternary structure, dimer of dimers.

It carries out the reaction L-lysyl-[protein] + acetyl-CoA = N(6)-acetyl-L-lysyl-[protein] + CoA + H(+). The enzyme catalyses succinyl-CoA + L-lysyl-[protein] = N(6)-succinyl-L-lysyl-[protein] + CoA + H(+). Its function is as follows. Acetylates and succinylates nucleoid-associated, DNA-binding protein HupB. The protein is Acetyl- and succinyl-CoA transferase MT0822 of Mycobacterium tuberculosis (strain CDC 1551 / Oshkosh).